Consider the following 778-residue polypeptide: Endonuclease MutS2 (778 aa).

329 to 336 (GPNTGGKT) provides a ligand contact to ATP. Residues 703–778 (LDLRGKRYEE…GSGCTIVTFK (76 aa)) form the Smr domain.

It belongs to the DNA mismatch repair MutS family. MutS2 subfamily. In terms of assembly, homodimer. Binds to stalled ribosomes, contacting rRNA.

Endonuclease that is involved in the suppression of homologous recombination and thus may have a key role in the control of bacterial genetic diversity. Its function is as follows. Acts as a ribosome collision sensor, splitting the ribosome into its 2 subunits. Detects stalled/collided 70S ribosomes which it binds and splits by an ATP-hydrolysis driven conformational change. Acts upstream of the ribosome quality control system (RQC), a ribosome-associated complex that mediates the extraction of incompletely synthesized nascent chains from stalled ribosomes and their subsequent degradation. Probably generates substrates for RQC. The chain is Endonuclease MutS2 from Streptococcus suis (strain 98HAH33).